Here is a 237-residue protein sequence, read N- to C-terminus: Undecaprenyl-diphosphatase (237 aa).

Transmembrane regions (helical) follow at residues 38–58 (QTAVLHLGTLVSVVLFAFDGI), 65–85 (WRIILNLIVSTIPAGVFGVLF), 92–112 (LFSSPRFLPLFFSVTALILMF), 126–146 (MSFLDALLVGIAQLFALFPGI), 166–186 (ALQYSFLMSIPVVLGAGILGL), 191–211 (VTILAPIFAFLSGLFALYVLS), and 217–237 (GKIWQFSYYCLFVAILSYLVG).

It belongs to the UppP family.

The protein localises to the cell inner membrane. It catalyses the reaction di-trans,octa-cis-undecaprenyl diphosphate + H2O = di-trans,octa-cis-undecaprenyl phosphate + phosphate + H(+). Functionally, catalyzes the dephosphorylation of undecaprenyl diphosphate (UPP). Confers resistance to bacitracin. The polypeptide is Undecaprenyl-diphosphatase (Thermotoga sp. (strain RQ2)).